The chain runs to 525 residues: Beta-galactoside alpha-2,6-sialyltransferase 2 (525 aa).

Topologically, residues 1–11 (MKPHLKQWRQR) are cytoplasmic. Residues 12–32 (MLFAIFVWGLLFLAIFIYFTN) form a helical; Signal-anchor for type II membrane protein membrane-spanning segment. Over 33-525 (SNPAAPMPSS…PVTRPNNTNT (493 aa)) the chain is Lumenal. 2 disordered regions span residues 85 to 107 (SASPFNSWPGDPQKGDQAQDGFD) and 145 to 183 (RQGALGLPSPGESSWQSGPGQPKQEKLRHPRRGSLPEEA). 3 disulfides stabilise this stretch: cysteine 249–cysteine 515, cysteine 292–cysteine 444, and cysteine 462–cysteine 473. N-linked (GlcNAc...) asparagine glycans are attached at residues asparagine 303 and asparagine 333. An N-linked (GlcNAc...) asparagine glycan is attached at asparagine 521.

This sequence belongs to the glycosyltransferase 29 family.

The protein resides in the golgi apparatus. The protein localises to the golgi stack membrane. The enzyme catalyses a beta-D-galactoside + CMP-N-acetyl-beta-neuraminate = an N-acetyl-alpha-neuraminyl-(2-&gt;6)-beta-D-galactosyl derivative + CMP + H(+). In terms of biological role, transfers sialic acid from the donor of substrate CMP-sialic acid to galactose containing acceptor substrates. Has alpha-2,6-sialyltransferase activity toward oligosaccharides that have the Gal-beta-1,4-GlcNAc sequence at the non-reducing end of their carbohydrate groups, but it has weak or no activities toward glycoproteins and glycolipids. The sequence is that of Beta-galactoside alpha-2,6-sialyltransferase 2 (St6gal2) from Rattus norvegicus (Rat).